We begin with the raw amino-acid sequence, 439 residues long: tRNA modification GTPase MnmE (439 aa).

Residues Arg24, Glu81, and Lys121 each contribute to the (6S)-5-formyl-5,6,7,8-tetrahydrofolate site. Residues 218–363 enclose the TrmE-type G domain; the sequence is GFKVVIAGAP…LRDLIGRVVK (146 aa). Asn228 contacts K(+). Residues 228–233, 247–253, and 272–275 contribute to the GTP site; these read NAGKSS, TDIAGTT, and DTAG. Residue Ser232 participates in Mg(2+) binding. The K(+) site is built by Thr247, Ile249, and Thr252. A Mg(2+)-binding site is contributed by Thr253. Lys439 contacts (6S)-5-formyl-5,6,7,8-tetrahydrofolate.

The protein belongs to the TRAFAC class TrmE-Era-EngA-EngB-Septin-like GTPase superfamily. TrmE GTPase family. As to quaternary structure, homodimer. Heterotetramer of two MnmE and two MnmG subunits. Requires K(+) as cofactor.

The protein resides in the cytoplasm. Its function is as follows. Exhibits a very high intrinsic GTPase hydrolysis rate. Involved in the addition of a carboxymethylaminomethyl (cmnm) group at the wobble position (U34) of certain tRNAs, forming tRNA-cmnm(5)s(2)U34. The sequence is that of tRNA modification GTPase MnmE from Rhizobium etli (strain CIAT 652).